Here is a 195-residue protein sequence, read N- to C-terminus: uncharacterized protein (195 aa).

A helical transmembrane segment spans residues 175 to 195 (ILGKISGFFGSIVSTIFSLFG).

The protein localises to the membrane. This is an uncharacterized protein from Methanocaldococcus jannaschii (strain ATCC 43067 / DSM 2661 / JAL-1 / JCM 10045 / NBRC 100440) (Methanococcus jannaschii).